We begin with the raw amino-acid sequence, 195 residues long: Protein A43 (195 aa).

An N-terminal signal peptide occupies residues 1–21; sequence MMIKWIISILTMSIMPVLVYS. The Extracellular segment spans residues 23–166; it reads SIFRFRSEDV…YKDINDKYND (144 aa). N-linked (GlcNAc...) asparagine; by host glycans are attached at residues Asn-66 and Asn-115. The helical transmembrane segment at 167–187 threads the bilayer; that stretch reads IYDFTAICMLIASTLIVTIYV. Residues 188–195 lie on the Cytoplasmic side of the membrane; sequence FKKIKMNS.

The protein belongs to the orthopoxvirus OPG172 protein family.

The protein localises to the host membrane. It localises to the host cell surface. The chain is Protein A43 (OPG172) from Homo sapiens (Human).